The sequence spans 257 residues: Type III pantothenate kinase (257 aa).

6–13 is a binding site for ATP; that stretch reads DVGNTSTK. 109–112 is a substrate binding site; sequence GADR. D111 serves as the catalytic Proton acceptor. D132 is a K(+) binding site. T135 serves as a coordination point for ATP. Residue T187 coordinates substrate.

This sequence belongs to the type III pantothenate kinase family. In terms of assembly, homodimer. It depends on NH4(+) as a cofactor. K(+) is required as a cofactor.

The protein resides in the cytoplasm. It carries out the reaction (R)-pantothenate + ATP = (R)-4'-phosphopantothenate + ADP + H(+). It functions in the pathway cofactor biosynthesis; coenzyme A biosynthesis; CoA from (R)-pantothenate: step 1/5. Functionally, catalyzes the phosphorylation of pantothenate (Pan), the first step in CoA biosynthesis. The protein is Type III pantothenate kinase of Anaplasma marginale (strain St. Maries).